A 488-amino-acid polypeptide reads, in one-letter code: Facilitated trehalose transporter Tret1-2 homolog (488 aa).

Topologically, residues M1 to Q28 are cytoplasmic. The helical transmembrane segment at V29–T49 threads the bilayer. Over S50–S72 the chain is Extracellular. Residues W73–I93 form a helical membrane-spanning segment. Topologically, residues E94–T105 are cytoplasmic. The chain crosses the membrane as a helical span at residues A106–L126. At C127 to R129 the chain is on the extracellular side. Residues F130–T150 traverse the membrane as a helical segment. Residues L151–G160 lie on the Cytoplasmic side of the membrane. A helical transmembrane segment spans residues L161 to M181. N-linked (GlcNAc...) asparagine glycosylation is present at N182. Topologically, residues N182–S184 are extracellular. Residues M185–P205 form a helical membrane-spanning segment. At E206–P268 the chain is on the cytoplasmic side. The chain crosses the membrane as a helical span at residues L269–F289. Over Y290–N305 the chain is Extracellular. A helical membrane pass occupies residues L306–I326. The Cytoplasmic portion of the chain corresponds to D327–K332. The chain crosses the membrane as a helical span at residues I333–F353. Residues Y354–C372 are Extracellular-facing. Residues F373 to G393 form a helical membrane-spanning segment. The Cytoplasmic segment spans residues E394–G402. A helical membrane pass occupies residues P403 to F423. Residues Q424–H433 lie on the Extracellular side of the membrane. Residues G434 to V454 form a helical membrane-spanning segment. The Cytoplasmic segment spans residues P455–M488.

The protein belongs to the major facilitator superfamily. Sugar transporter (TC 2.A.1.1) family. Trehalose transporter subfamily.

The protein resides in the cell membrane. Functionally, fails to transport trehalose. This is Facilitated trehalose transporter Tret1-2 homolog from Drosophila simulans (Fruit fly).